The primary structure comprises 371 residues: MTSLSDILASSAEAGLSLQRSDGSMPAGHNGPYHDPETPVRNTSHWLVTFLKAHELTDENRFRQAASDAVSYLLSEEARPHGHTFEHRQNDTKDRCNGLMGQAWSLEALALAARALDNERAAAVAADVFLSHPFCDKLKLWQRVDTDGTILGFDRTFNHQLWFAASGGLVAHTAPQEVSQRVRDFLDSLPSTIDLYENGLIRHPLRPSMDLSELAESVTHDVHRSMVRNHLLHYLRPPRSKRRLRNKAEGYHSFNLYALAILAREFPSHSVWSTDLLSDILEYTLSEEFREATTDNKFSHPYNPPGFEVPAAMETFSVGSYKEREMWVNEQIQHSFDPNTSLLTRGTDDKQTHAARLYEATRLDDYEIYLD.

Residues 19-39 form a disordered region; it reads QRSDGSMPAGHNGPYHDPETP.

It is found in the cytoplasm. It participates in cell surface structure biogenesis; S-layer biogenesis. Putative isomerase involved in the N-glycosylation pathway. Required for the appearance of the methyl ester of hexuronic acid found at position four of the pentasaccharide N-linked to the S-layer glycoprotein. Either involved in preparing the third sugar for attachment of the fourth pentasaccharide subunit or processing the fourth sugar prior to its addition to the lipid-linked trisaccharide. The sequence is that of Archaeal glycosylation protein Q (aglQ) from Haloferax volcanii (strain ATCC 29605 / DSM 3757 / JCM 8879 / NBRC 14742 / NCIMB 2012 / VKM B-1768 / DS2) (Halobacterium volcanii).